Reading from the N-terminus, the 173-residue chain is Crossover junction endodeoxyribonuclease RuvC (173 aa).

Catalysis depends on residues D8, E67, and D139. D8, E67, and D139 together coordinate Mg(2+).

It belongs to the RuvC family. Homodimer which binds Holliday junction (HJ) DNA. The HJ becomes 2-fold symmetrical on binding to RuvC with unstacked arms; it has a different conformation from HJ DNA in complex with RuvA. In the full resolvosome a probable DNA-RuvA(4)-RuvB(12)-RuvC(2) complex forms which resolves the HJ. The cofactor is Mg(2+).

The protein localises to the cytoplasm. The catalysed reaction is Endonucleolytic cleavage at a junction such as a reciprocal single-stranded crossover between two homologous DNA duplexes (Holliday junction).. Functionally, the RuvA-RuvB-RuvC complex processes Holliday junction (HJ) DNA during genetic recombination and DNA repair. Endonuclease that resolves HJ intermediates. Cleaves cruciform DNA by making single-stranded nicks across the HJ at symmetrical positions within the homologous arms, yielding a 5'-phosphate and a 3'-hydroxyl group; requires a central core of homology in the junction. The consensus cleavage sequence is 5'-(A/T)TT(C/G)-3'. Cleavage occurs on the 3'-side of the TT dinucleotide at the point of strand exchange. HJ branch migration catalyzed by RuvA-RuvB allows RuvC to scan DNA until it finds its consensus sequence, where it cleaves and resolves the cruciform DNA. This Shewanella baltica (strain OS223) protein is Crossover junction endodeoxyribonuclease RuvC.